The following is a 103-amino-acid chain: Histone H4 (103 aa).

Gly residues predominate over residues 1-14; it reads MSGRGKGGKGLGKG. The disordered stretch occupies residues 1 to 20; the sequence is MSGRGKGGKGLGKGGAKRHR. Ser-2 carries the N-acetylserine modification. A Phosphoserine modification is found at Ser-2. An Asymmetric dimethylarginine; by PRMT1; alternate modification is found at Arg-4. Arg-4 is modified (citrulline; alternate). The residue at position 4 (Arg-4) is an Omega-N-methylarginine; by PRMT1; alternate. A Symmetric dimethylarginine; by PRMT5 and PRMT7; alternate modification is found at Arg-4. An N6-(2-hydroxyisobutyryl)lysine; alternate mark is found at Lys-6, Lys-9, Lys-13, and Lys-17. Position 6 is an N6-acetyl-N6-methyllysine; alternate (Lys-6). N6-acetyllysine occurs at positions 6, 9, 13, and 17. Lys-6, Lys-9, Lys-13, and Lys-17 each carry N6-butyryllysine; alternate. At Lys-6 the chain carries N6-glutaryllysine; alternate. 4 positions are modified to N6-lactoyllysine; alternate: Lys-6, Lys-9, Lys-13, and Lys-17. Lys-9 is modified (N6-propionyllysine; alternate). N6-acetyl-N6-methyllysine; alternate is present on Lys-13. Lys-13 is subject to N6-glutaryllysine; alternate. The residue at position 13 (Lys-13) is an N6-methyllysine; alternate. Position 17 is an N6-propionyllysine; alternate (Lys-17). The DNA-binding element occupies 17 to 21; it reads KRHRK. Residue Lys-21 is modified to N6-methyllysine; alternate. At Lys-21 the chain carries N6,N6,N6-trimethyllysine; alternate. Lys-21 carries the post-translational modification N6,N6-dimethyllysine; alternate. Lys-21 carries the N6-methylated lysine modification. An N6-(2-hydroxyisobutyryl)lysine; alternate mark is found at Lys-32 and Lys-45. At Lys-32 the chain carries N6-acetyllysine. Lys-32 and Lys-45 each carry N6-butyryllysine; alternate. Lys-32 is subject to N6-glutaryllysine; alternate. Position 32 is an N6-lactoyllysine; alternate (Lys-32). Residues Lys-32 and Lys-45 each carry the N6-propionyllysine; alternate modification. N6-succinyllysine; alternate is present on Lys-32. A Glycyl lysine isopeptide (Lys-Gly) (interchain with G-Cter in UFM1); alternate cross-link involves residue Lys-32. Ser-48 is modified (phosphoserine; by PAK2). Tyr-52 carries the phosphotyrosine modification. At Lys-60 the chain carries N6-acetyllysine. An N6-glutaryllysine; alternate mark is found at Lys-60, Lys-78, and Lys-80. An N6-(2-hydroxyisobutyryl)lysine modification is found at Lys-60. N6-(2-hydroxyisobutyryl)lysine; alternate is present on residues Lys-78 and Lys-80. N6-butyryllysine; alternate is present on residues Lys-78 and Lys-80. Lys-78 is subject to N6-lactoyllysine; alternate. N6-propionyllysine; alternate occurs at positions 78 and 80. Lys-78 bears the N6-succinyllysine mark. Lys-80 carries the N6-acetyllysine modification. Tyr-89 bears the Phosphotyrosine mark. Lys-92 carries the N6-(2-hydroxyisobutyryl)lysine; alternate modification. Lys-92 is modified (N6-butyryllysine; alternate). At Lys-92 the chain carries N6-glutaryllysine; alternate. An N6-lactoyllysine; alternate modification is found at Lys-92. Lys-92 is modified (N6-propionyllysine; alternate). The residue at position 92 (Lys-92) is an N6-succinyllysine; alternate. Residue Lys-92 is modified to N6-acetyllysine; alternate. Lys-92 is covalently cross-linked (Glycyl lysine isopeptide (Lys-Gly) (interchain with G-Cter in ubiquitin); alternate).

Belongs to the histone H4 family. The nucleosome is a histone octamer containing two molecules each of H2A, H2B, H3 and H4 assembled in one H3-H4 heterotetramer and two H2A-H2B heterodimers. The octamer wraps approximately 147 bp of DNA. In terms of processing, acetylation at Lys-6 (H4K5ac), Lys-9 (H4K8ac), Lys-13 (H4K12ac) and Lys-17 (H4K16ac) occurs in coding regions of the genome but not in heterochromatin. Post-translationally, citrullination at Arg-4 (H4R3ci) by PADI4 impairs methylation. Monomethylation and asymmetric dimethylation at Arg-4 (H4R3me1 and H4R3me2a, respectively) by PRMT1 favors acetylation at Lys-9 (H4K8ac) and Lys-13 (H4K12ac). Demethylation is performed by JMJD6. Symmetric dimethylation on Arg-4 (H4R3me2s) by the PRDM1/PRMT5 complex may play a crucial role in the germ-cell lineage. In terms of processing, monomethylated, dimethylated or trimethylated at Lys-21 (H4K20me1, H4K20me2, H4K20me3). Monomethylation is performed by KMT5A/SET8. Trimethylation is performed by KMT5B and KMT5C and induces gene silencing. Monomethylated at Lys-13 (H4K12me1) by N6AMT1; H4K12me1 modification is present at the promoters of numerous genes encoding cell cycle regulators. Post-translationally, acetyl-methylated at Lys-6 and Lys-13 (H4K5acme and H4K12acme, respectively), acetyl-methylation is an epigenetic mark of active chromatin associated with increased transcriptional initiation. Acetyl-methylation is formed by acetylation by EP300/p300 of lysine residues that are already monomethylated on the same side chain. H4K5acme and H4K12acme marks specifically bind BRD2. Phosphorylated by pak2 at Ser-48 (H4S47ph). This phosphorylation increases the association of H3.3-H4 with the histone chaperone HIRA, thus promoting nucleosome assembly of H3.3-H4 and inhibiting nucleosome assembly of H3.1-H4. In terms of processing, ubiquitinated by the CUL4-DDB-RBX1 complex in response to ultraviolet irradiation. This may weaken the interaction between histones and DNA and facilitate DNA accessibility to repair proteins. Monoubiquitinated at Lys-92 of histone H4 (H4K91ub1) in response to DNA damage. The exact role of H4K91ub1 in DNA damage response is still unclear but it may function as a licensing signal for additional histone H4 post-translational modifications such as H4 Lys-21 methylation (H4K20me). Post-translationally, sumoylated, which is associated with transcriptional repression. Butyrylation of histones marks active promoters and competes with histone acetylation. In terms of processing, glutarylation at Lys-92 (H4K91glu) destabilizes nucleosomes by promoting dissociation of the H2A-H2B dimers from nucleosomes. Post-translationally, ufmylated; monofmylated by UFL1 at Lys-32 (H4K31Ufm1) in response to DNA damage. Lactylated in macrophages by EP300/P300 by using lactoyl-CoA directly derived from endogenous or exogenous lactate, leading to stimulates gene transcription. Delactylated by SIRT3 at Lys-17 (H4K16la).

It is found in the nucleus. The protein resides in the chromosome. In terms of biological role, core component of nucleosome. Nucleosomes wrap and compact DNA into chromatin, limiting DNA accessibility to the cellular machineries which require DNA as a template. Histones thereby play a central role in transcription regulation, DNA repair, DNA replication and chromosomal stability. DNA accessibility is regulated via a complex set of post-translational modifications of histones, also called histone code, and nucleosome remodeling. The sequence is that of Histone H4 from Xenopus laevis (African clawed frog).